The following is a 173-amino-acid chain: Large ribosomal subunit protein uL16 (173 aa).

The protein belongs to the universal ribosomal protein uL16 family.

The polypeptide is Large ribosomal subunit protein uL16 (Methanococcus maripaludis (strain C6 / ATCC BAA-1332)).